The sequence spans 249 residues: Tetraspanin-7 (249 aa).

Topologically, residues 1–16 (MASRRMETKPVITCLK) are cytoplasmic. A helical membrane pass occupies residues 17-40 (TLLIIYSFVFWITGVILLAVGVWG). The Extracellular portion of the chain corresponds to 41 to 56 (KLTLGTYISLIAENST). The N-linked (GlcNAc...) asparagine glycan is linked to Asn54. The chain crosses the membrane as a helical span at residues 57–75 (NAPYVLIGTGTTIVVFGLF). Residues 76–86 (GCFATCRGSPW) are Cytoplasmic-facing. Residues 87 to 112 (MLKLYAMFLSLVFLAELVAGISGFVF) form a helical membrane-spanning segment. The Extracellular portion of the chain corresponds to 113-213 (RHEIKDTFLR…LVTSFMETNM (101 aa)). N-linked (GlcNAc...) asparagine glycans are attached at residues Asn155, Asn158, Asn177, and Asn188. A helical transmembrane segment spans residues 214 to 234 (GIIAGVAFGIAFSQLIGMLLA). The Cytoplasmic portion of the chain corresponds to 235–249 (CCLSRFITANQYEMV).

It belongs to the tetraspanin (TM4SF) family.

It localises to the membrane. Its function is as follows. May be involved in cell proliferation and cell motility. This chain is Tetraspanin-7 (Tspan7), found in Mus musculus (Mouse).